The chain runs to 236 residues: 2-C-methyl-D-erythritol 4-phosphate cytidylyltransferase (236 aa).

The protein belongs to the IspD/TarI cytidylyltransferase family. IspD subfamily.

It catalyses the reaction 2-C-methyl-D-erythritol 4-phosphate + CTP + H(+) = 4-CDP-2-C-methyl-D-erythritol + diphosphate. It participates in isoprenoid biosynthesis; isopentenyl diphosphate biosynthesis via DXP pathway; isopentenyl diphosphate from 1-deoxy-D-xylulose 5-phosphate: step 2/6. Its function is as follows. Catalyzes the formation of 4-diphosphocytidyl-2-C-methyl-D-erythritol from CTP and 2-C-methyl-D-erythritol 4-phosphate (MEP). This chain is 2-C-methyl-D-erythritol 4-phosphate cytidylyltransferase, found in Azoarcus sp. (strain BH72).